We begin with the raw amino-acid sequence, 33 residues long: Toxin Bcg III 25.52 (33 aa).

A disulfide bridge connects residues C6 and C28.

It is found in the secreted. Its subcellular location is the nematocyst. This is Toxin Bcg III 25.52 from Bunodosoma cangicum (Sea anemone).